Consider the following 985-residue polypeptide: Translation initiation factor IF-2 (985 aa).

Basic and acidic residues-rich tracts occupy residues 49–58 (QYGKKQEKSS), 65–89 (IQREHGRGQGMEDKKEKDQLFRPDN), and 99–113 (VPNRPPDRRYEDKAK). Residues 49–401 (QYGKKQEKSS…QQSAPPPILD (353 aa)) form a disordered region. Positions 125–136 (SKTTTNSENEQT) are enriched in polar residues. The segment covering 137 to 162 (APRQGSAQQSGQGRPQANRPQGSQGR) has biased composition (low complexity). 2 stretches are compositionally biased toward gly residues: residues 180 to 246 (PQGG…GQGR) and 288 to 324 (PQGGQGRPYGDRPQGGQGRHYGDRPQGGQGRPQGAGR). Basic and acidic residues predominate over residues 349–377 (KAPDKTKGDRRKNYEKDGKWADGQIEKNK). Over residues 378 to 391 (LFKGRNNKNKKRQH) the composition is skewed to basic residues. Positions 485 to 654 (LRPPVVTIMG…LLVAEVHELK (170 aa)) constitute a tr-type G domain. A G1 region spans residues 494-501 (GHVDHGKT). 494 to 501 (GHVDHGKT) is a binding site for GTP. A G2 region spans residues 519–523 (GITQH). The tract at residues 540 to 543 (DTPG) is G3. Residues 540 to 544 (DTPGH) and 594 to 597 (NKMD) each bind GTP. The segment at 594–597 (NKMD) is G4. The tract at residues 630–632 (SAK) is G5.

The protein belongs to the TRAFAC class translation factor GTPase superfamily. Classic translation factor GTPase family. IF-2 subfamily.

Its subcellular location is the cytoplasm. In terms of biological role, one of the essential components for the initiation of protein synthesis. Protects formylmethionyl-tRNA from spontaneous hydrolysis and promotes its binding to the 30S ribosomal subunits. Also involved in the hydrolysis of GTP during the formation of the 70S ribosomal complex. This is Translation initiation factor IF-2 from Desulforamulus reducens (strain ATCC BAA-1160 / DSM 100696 / MI-1) (Desulfotomaculum reducens).